The chain runs to 204 residues: uncharacterized protein (204 aa).

The signal sequence occupies residues 1–17 (MKRLVTGLLALSLFLAA). The tract at residues 17-100 (ACGQDSDQQK…NNNQANNNQK (84 aa)) is disordered. Cysteine 18 carries N-palmitoyl cysteine lipidation. Cysteine 18 carries the S-diacylglycerol cysteine lipid modification. Residues 23–70 (DQQKDGNKEKDDKAKTEQQDKKTNDSSKDKKDNKDDSKDVNKDNKDNS) are compositionally biased toward basic and acidic residues. Residues 71–100 (ANDNQQQSNSNATNNDQNQTNNNQANNNQK) show a composition bias toward low complexity.

It is found in the cell membrane. This is an uncharacterized protein from Staphylococcus aureus (strain MSSA476).